The primary structure comprises 171 residues: Co-chaperone protein HscB (171 aa).

Positions Asp-2–Leu-74 constitute a J domain.

This sequence belongs to the HscB family. As to quaternary structure, interacts with HscA and stimulates its ATPase activity. Interacts with IscU.

Functionally, co-chaperone involved in the maturation of iron-sulfur cluster-containing proteins. Seems to help targeting proteins to be folded toward HscA. The chain is Co-chaperone protein HscB from Klebsiella pneumoniae (strain 342).